We begin with the raw amino-acid sequence, 145 residues long: uncharacterized protein (145 aa).

This is an uncharacterized protein from Bacillus subtilis (strain 168).